The primary structure comprises 514 residues: Protein farnesyltransferase subunit beta (514 aa).

Positions 1–13 are enriched in basic residues; it reads MRHHTKNLRRRAI. Positions 1-56 are disordered; that stretch reads MRHHTKNLRRRAIFLRTTPRGNMDSSSSVATSTSSSSNHRLVRSSEGSPSAGGDDI. Residues 25–39 show a composition bias toward low complexity; it reads SSSSVATSTSSSSNH. PFTB repeat units lie at residues 180–221, 231–272, 293–334, 346–388, and 410–454; these read AESL…AVVG, RRAL…SLLN, FTGL…SLLG, IERL…PLIE, and REGL…SSAQ. (2E,6E)-farnesyl diphosphate-binding positions include 319–322 and 367–370; these read HGAY and RTNK. Asp-373 and Cys-375 together coordinate Zn(2+). A (2E,6E)-farnesyl diphosphate-binding site is contributed by 376 to 379; the sequence is YSHW. His-442 contributes to the Zn(2+) binding site.

This sequence belongs to the protein prenyltransferase subunit beta family. In terms of assembly, heterodimer of an alpha and a beta subunit. Interacts with RAS1 and RAS2. Zn(2+) serves as cofactor. As to expression, highly expressed in mycelium, conidium, conidial germination, early formed appressorium and the late infection hypha.

It is found in the cytoplasm. It catalyses the reaction L-cysteinyl-[protein] + (2E,6E)-farnesyl diphosphate = S-(2E,6E)-farnesyl-L-cysteinyl-[protein] + diphosphate. Functionally, catalyzes the transfer of a farnesyl moiety from farnesyl diphosphate to a cysteine at the fourth position from the C-terminus of several proteins having the C-terminal sequence Cys-aliphatic-aliphatic-X. The beta subunit is responsible for peptide-binding. The protein is Protein farnesyltransferase subunit beta (RAM1) of Pyricularia oryzae (strain 70-15 / ATCC MYA-4617 / FGSC 8958) (Rice blast fungus).